The primary structure comprises 52 residues: Insulin-2 (52 aa).

Intrachain disulfides connect C7/C38, C19/C51, and C37/C42.

This sequence belongs to the insulin family. In terms of assembly, heterodimer of a B chain and an A chain linked by two disulfide bonds.

The protein localises to the secreted. Functionally, insulin decreases blood glucose concentration. It increases cell permeability to monosaccharides, amino acids and fatty acids. It accelerates glycolysis, the pentose phosphate cycle, and glycogen synthesis in liver. The chain is Insulin-2 from Huso dauricus (Kaluga sturgeon).